The following is a 292-amino-acid chain: Nucleotide-binding protein Ldb0621 (292 aa).

Residue 14–21 (GMSGAGKT) coordinates ATP. 64–67 (DLRV) is a binding site for GTP.

It belongs to the RapZ-like family.

Displays ATPase and GTPase activities. This is Nucleotide-binding protein Ldb0621 from Lactobacillus delbrueckii subsp. bulgaricus (strain ATCC 11842 / DSM 20081 / BCRC 10696 / JCM 1002 / NBRC 13953 / NCIMB 11778 / NCTC 12712 / WDCM 00102 / Lb 14).